Consider the following 211-residue polypeptide: MKKNTLSAILMTLFLFISCNNSGKDGNTSANSADESVKGPNLTEISKKITDSNAVLLAVKEVEALLSSIDELAKAIGKKIKNDGSLGDEANHNESLLAGAYTISTLITQKLSKLNGSEGLKEKIAAAKKCSEEFSTKLKDNHAQLGIQGVTDENAKKAILKANAAGKDKGVEELEKLSGSLESLSKAAKEMLANSVKELTSPVVAESPKKP.

The first 18 residues, 1–18, serve as a signal peptide directing secretion; sequence MKKNTLSAILMTLFLFIS. Residue cysteine 19 is the site of N-palmitoyl cysteine attachment. Cysteine 19 carries the S-diacylglycerol cysteine lipid modification.

The protein belongs to the OspC lipoprotein family. In terms of assembly, homodimer. Interacts with tick I.ricinus salivary protein Iric-1, Iric-2 and Iric-3. Binds human (host) plasminogen.

The protein resides in the cell outer membrane. It localises to the cell surface. In terms of biological role, major immunodominant protein in mammalian hosts. Required for initial stages of mammalian infection. Inhibits macrophage-mediated phagocytosis of the bacteria. Binds human plasminogen; this probably confers an extracellular protease activity on the bacteria that allows it to traverse tissue. Interaction with tick I.ricinus salivary protein Salp15 protects the bacteria from antibody-mediated killing in vitro and in vivo. The sequence is that of Outer surface protein C from Borreliella burgdorferi (Lyme disease spirochete).